The sequence spans 407 residues: Imidazolonepropionase (407 aa).

Fe(3+) is bound by residues His68 and His70. Residues His68 and His70 each contribute to the Zn(2+) site. 4-imidazolone-5-propanoate-binding residues include Arg77, Tyr140, and His173. Residue Tyr140 coordinates N-formimidoyl-L-glutamate. A Fe(3+)-binding site is contributed by His238. His238 is a Zn(2+) binding site. Gln241 serves as a coordination point for 4-imidazolone-5-propanoate. Asp313 contributes to the Fe(3+) binding site. Asp313 is a Zn(2+) binding site. N-formimidoyl-L-glutamate is bound by residues Asn315 and Gly317. Position 318 (Thr318) interacts with 4-imidazolone-5-propanoate.

It belongs to the metallo-dependent hydrolases superfamily. HutI family. Zn(2+) is required as a cofactor. Fe(3+) serves as cofactor.

The protein localises to the cytoplasm. The enzyme catalyses 4-imidazolone-5-propanoate + H2O = N-formimidoyl-L-glutamate. Its pathway is amino-acid degradation; L-histidine degradation into L-glutamate; N-formimidoyl-L-glutamate from L-histidine: step 3/3. In terms of biological role, catalyzes the hydrolytic cleavage of the carbon-nitrogen bond in imidazolone-5-propanoate to yield N-formimidoyl-L-glutamate. It is the third step in the universal histidine degradation pathway. This is Imidazolonepropionase from Burkholderia cenocepacia (strain ATCC BAA-245 / DSM 16553 / LMG 16656 / NCTC 13227 / J2315 / CF5610) (Burkholderia cepacia (strain J2315)).